The chain runs to 306 residues: MRRKRGRPIDGWLVIDKPSGMTSTDVVNRVKRLFDARKAGHGGTLDPLATGLLPIAFGAATKTVPYIMDGTKRYEFTLRLGEARDTDDAEGAVIETSDVRPTDDAFRAALPAFRGDIMQVPPIYSAIKVAGERAYDMAREGRAPDLPPRPARVDRFDLVARPDADTAIFAVESGKGVYMRSLARDIARACGTVGHVAALRRLRVGPFSEADAILLDKIVPSDDNAPASPDLLLPVATALADIPALALTHEEADALSHGRAVSLLDLMGRIPDAVDPACGIVRGMDGARVIGLCRLEDGWLRPDRML.

Residue Asp46 is the Nucleophile of the active site.

The protein belongs to the pseudouridine synthase TruB family. Type 1 subfamily.

The enzyme catalyses uridine(55) in tRNA = pseudouridine(55) in tRNA. Responsible for synthesis of pseudouridine from uracil-55 in the psi GC loop of transfer RNAs. This Gluconacetobacter diazotrophicus (strain ATCC 49037 / DSM 5601 / CCUG 37298 / CIP 103539 / LMG 7603 / PAl5) protein is tRNA pseudouridine synthase B.